Reading from the N-terminus, the 370-residue chain is DNA replication and repair protein RecF (370 aa).

30-37 (GENAQGKT) is an ATP binding site.

This sequence belongs to the RecF family.

It is found in the cytoplasm. In terms of biological role, the RecF protein is involved in DNA metabolism; it is required for DNA replication and normal SOS inducibility. RecF binds preferentially to single-stranded, linear DNA. It also seems to bind ATP. This is DNA replication and repair protein RecF from Staphylococcus carnosus (strain TM300).